Consider the following 184-residue polypeptide: Photosystem I assembly protein Ycf4 (184 aa).

2 consecutive transmembrane segments (helical) span residues 22–42 and 57–77; these read FCWAFILFLGSLGFLLVGTSS and IIFFPQGIVMSFYGIAGLFIS.

This sequence belongs to the Ycf4 family.

Its subcellular location is the plastid. It localises to the chloroplast thylakoid membrane. In terms of biological role, seems to be required for the assembly of the photosystem I complex. This chain is Photosystem I assembly protein Ycf4, found in Olimarabidopsis pumila (Dwarf rocket).